Here is a 744-residue protein sequence, read N- to C-terminus: Protein zyg-11 homolog B (744 aa).

LRR repeat units follow at residues 185 to 208, 216 to 236, and 237 to 261; these read LPRL…LACK, MHHL…VREL, and KHLN…LLEQ.

It belongs to the zyg-11 family. (Microbial infection) Interacts with SARS-COV-2 protein ORF10. In terms of assembly, interacts with ELOC/Elongin C. Part of an E3 ubiquitin ligase complex including ZYG11B, CUL2 and Elongin BC. In terms of processing, (Microbial infection) Ubiquitinated; leading to proteasomal degradation in the presence of herpes simplex virus 1/HHV-1.

The protein resides in the cytoplasm. Its function is as follows. Serves as substrate adapter subunit in the E3 ubiquitin ligase complex ZYG11B-CUL2-Elongin BC. Acts to target substrates bearing N-terminal degrons for proteasomal degradation with the first four residues of substrates being the key recognition elements. Prefers Nt-Gly but also has the capacity to recognize Nt-Ser, -Ala and -Cys. Involved in the clearance of proteolytic fragments generated by caspase cleavage during apoptosis since N-terminal glycine degrons are strongly enriched at caspase cleavage sites. Also important in the quality control of protein N-myristoylation in which N-terminal glycine degrons are conditionally exposed after a failure of N-myristoylation. In addition, plays a role in the amplification of cGAS to enhance innate immune response. Mechanistically, strengthens the processes of cGAS binding with dsDNA and assembling oligomers and also accelerates and stabilizes cGAS-DNA condensation, thereby enhancing production of antiviral IFNs and inflammatory cytokines. The polypeptide is Protein zyg-11 homolog B (Homo sapiens (Human)).